The primary structure comprises 102 residues: Small ribosomal subunit protein uS10 (102 aa).

Belongs to the universal ribosomal protein uS10 family. Part of the 30S ribosomal subunit.

Functionally, involved in the binding of tRNA to the ribosomes. The sequence is that of Small ribosomal subunit protein uS10 from Methylocella silvestris (strain DSM 15510 / CIP 108128 / LMG 27833 / NCIMB 13906 / BL2).